The sequence spans 422 residues: Zinc finger and BTB domain-containing protein 42 (422 aa).

In terms of domain architecture, BTB spans 24–92; sequence CDCTVLVGDA…MYEGRLDLRS (69 aa). 3 disordered regions span residues 121–141, 166–188, and 207–256; these read KDRSLDPGNPAPGAEPAQPPC, AALPPRASGPPPCQVPEESDQAL, and LQTP…AAKG. The span at 243–252 shows a compositional bias: pro residues; the sequence is HSPPKPPPVP. 4 C2H2-type zinc fingers span residues 294-316, 334-356, 362-384, and 390-413; these read CICPLCSKLFPSSHVLQLHLSAH, PTCPLCGKTFSCTYTLKRHERTH, YTCVQCGKSFQYSHNLSRHTVVH, and HACRWCERRFTQSGDLYRHVRKFH.

This sequence belongs to the krueppel C2H2-type zinc-finger protein family. ZBTB18 subfamily. In terms of tissue distribution, expressed in skeletal muscle (at protein level).

Its subcellular location is the cytoplasm. The protein localises to the nucleus. It is found in the nucleoplasm. Functionally, transcriptional repressor. Specifically binds DNA and probably acts by recruiting chromatin remodeling multiprotein complexes. This chain is Zinc finger and BTB domain-containing protein 42 (ZBTB42), found in Homo sapiens (Human).